A 106-amino-acid polypeptide reads, in one-letter code: ATP-dependent Clp protease adapter protein ClpS (106 aa).

The protein belongs to the ClpS family. In terms of assembly, binds to the N-terminal domain of the chaperone ClpA.

Involved in the modulation of the specificity of the ClpAP-mediated ATP-dependent protein degradation. This chain is ATP-dependent Clp protease adapter protein ClpS, found in Escherichia fergusonii (strain ATCC 35469 / DSM 13698 / CCUG 18766 / IAM 14443 / JCM 21226 / LMG 7866 / NBRC 102419 / NCTC 12128 / CDC 0568-73).